The following is a 155-amino-acid chain: Large ribosomal subunit protein uL30 (155 aa).

It belongs to the universal ribosomal protein uL30 family. In terms of assembly, part of the 50S ribosomal subunit.

In Nitrosopumilus maritimus (strain SCM1), this protein is Large ribosomal subunit protein uL30.